A 3066-amino-acid polypeptide reads, in one-letter code: Serine-protein kinase ATM (3066 aa).

Ser-2 is modified (N-acetylserine). Ser-367 carries the post-translational modification Phosphoserine; by autocatalysis. A disordered region spans residues 829 to 862; the sequence is LDHGVHPGEDDEDGGGCDSLMEAEGPSSTGLSTA. The segment at 1380 to 1389 is interaction with ABL1; it reads DPAPNPPYFP. Phosphoserine; by autocatalysis is present on Ser-1899. One can recognise an FAT domain in the interval 1946–2576; the sequence is EVAKVAQSCS…LFIILALANA (631 aa). Residues 1973 to 1982 show a composition bias toward basic and acidic residues; that stretch reads TDEQEKRSPT. Disordered regions lie at residues 1973–2000 and 2585–2607; these read TDEQ…EKSK and PETT…LDED. Positions 1985–1996 are enriched in polar residues; sequence EGSQGTTISSLS. Ser-1987 bears the Phosphoserine; by autocatalysis mark. Over residues 2597 to 2607 the composition is skewed to basic and acidic residues; the sequence is TSKENSHLDED. Residues 2696–3009 form the PI3K/PI4K catalytic domain; the sequence is FKTEFRLAGG…ECKQSLSDTD (314 aa). A G-loop region spans residues 2702–2708; that stretch reads LAGGLNL. Positions 2877–2885 are catalytic loop; sequence GLGDRHVQN. The segment at 2897–2921 is activation loop; it reads HIDLGVAFEQGKILPTPETVPFRLS. The interval 2986-3007 is disordered; it reads DESDLHSTPNADDQECKQSLSD. Residues 2991–3007 show a composition bias toward polar residues; sequence HSTPNADDQECKQSLSD. The residue at position 3006 (Ser-3006) is a Phosphoserine. Residue Lys-3026 is modified to N6-acetyllysine. The region spanning 3034 to 3066 is the FATC domain; sequence TVLSVGGQVNLLIQQAMDPKNLSRLFPGWKAWV. The Microbody targeting signal; atypical motif lies at 3056-3058; that stretch reads SRL.

This sequence belongs to the PI3/PI4-kinase family. ATM subfamily. In terms of assembly, homodimer. Dimers or tetramers in inactive state. On DNA damage, autophosphorylation dissociates ATM into monomers rendering them catalytically active. Binds p53/TP53, ABL1, BRCA1 and TERF1. Interacts with NBN (via FxF/Y motif). Part of the BRCA1-associated genome surveillance complex (BASC), which contains BRCA1, MSH2, MSH6, MLH1, ATM, BLM, PMS2 and the RAD50-MRE11-NBN protein complex. This association could be a dynamic process changing throughout the cell cycle and within subnuclear domains. Interacts with RAD17; DNA damage promotes the association. Interacts with EEF1E1; the interaction, induced on DNA damage, up-regulates TP53. Interacts with KAT8, NABP2, ATMIN and CEP164. Interacts with AP2B1 and AP3B2; the interaction occurs in cytoplasmic vesicles. Interacts with TELO2 and TTI1. Interacts with DDX1. Interacts with BRAT1. Interacts with CYREN (via XLF motif). Interacts (via microbody targeting signal) with PEX5; promoting translocation to peroxisomes in response to reactive oxygen species (ROS). Phosphorylated by NUAK1/ARK5. Autophosphorylation on Ser-367, Ser-1899, Ser-1987 correlates with DNA damage-mediated activation of the kinase. Post-translationally, phosphorylated by NUAK1/ARK5. Autophosphorylation on Ser-367, Ser-1899, Ser-1987 correlates with DNA damage-mediated activation of the kinase. During the late stages of DNA damage response, dephosphorylated following deacetylation by SIRT7, leading to ATM deactivation. In terms of processing, acetylation, on DNA damage, is required for activation of the kinase activity, dimer-monomer transition, and subsequent autophosphorylation on Ser-1987. Acetylated in vitro by KAT5/TIP60. Deacetylated by SIRT7 during the late stages of DNA damage response, promoting ATM dephosphorylation and subsequent deactivation. In terms of tissue distribution, expressed in brain, skeletal muscle, testis, followed by spleen, lung, kidney, heart, liver and thymus. Ubiquitously expressed in embryonal tissues.

It localises to the nucleus. The protein localises to the cytoplasmic vesicle. It is found in the cytoplasm. Its subcellular location is the cytoskeleton. The protein resides in the microtubule organizing center. It localises to the centrosome. The protein localises to the peroxisome matrix. The catalysed reaction is L-seryl-[protein] + ATP = O-phospho-L-seryl-[protein] + ADP + H(+). It carries out the reaction L-threonyl-[protein] + ATP = O-phospho-L-threonyl-[protein] + ADP + H(+). Activated by the MRN (MRE11-RAD50-NBS1) complex in response to DNA double strand breaks (DSBs), which recruits ATM to DSBs and promotes its activation. Inhibited by wortmannin. In terms of biological role, serine/threonine protein kinase which activates checkpoint signaling upon double strand breaks (DSBs), apoptosis and genotoxic stresses such as ionizing ultraviolet A light (UVA), thereby acting as a DNA damage sensor. Recognizes the substrate consensus sequence [ST]-Q. Phosphorylates 'Ser-139' of histone variant H2AX at double strand breaks (DSBs), thereby regulating DNA damage response mechanism. Also plays a role in pre-B cell allelic exclusion, a process leading to expression of a single immunoglobulin heavy chain allele to enforce clonality and monospecific recognition by the B-cell antigen receptor (BCR) expressed on individual B-lymphocytes. After the introduction of DNA breaks by the RAG complex on one immunoglobulin allele, acts by mediating a repositioning of the second allele to pericentromeric heterochromatin, preventing accessibility to the RAG complex and recombination of the second allele. Also involved in signal transduction and cell cycle control. May function as a tumor suppressor. Necessary for activation of ABL1 and SAPK. Phosphorylates DYRK2, CHEK2, p53/TP53, FBXW7, FANCD2, NFKBIA, BRCA1, CREBBP/CBP, RBBP8/CTIP, FBXO46, MRE11, nibrin (NBN), RAD50, RAD17, PELI1, TERF1, UFL1, RAD9, UBQLN4 and DCLRE1C. May play a role in vesicle and/or protein transport. Could play a role in T-cell development, gonad and neurological function. Binds DNA ends. Plays a role in replication-dependent histone mRNA degradation. Phosphorylation of DYRK2 in nucleus in response to genotoxic stress prevents its MDM2-mediated ubiquitination and subsequent proteasome degradation. Phosphorylates ATF2 which stimulates its function in DNA damage response. Phosphorylates ERCC6 which is essential for its chromatin remodeling activity at DNA double-strand breaks. Phosphorylates TTC5/STRAP at 'Ser-203' in the cytoplasm in response to DNA damage, which promotes TTC5/STRAP nuclear localization. Also involved in pexophagy by mediating phosphorylation of PEX5: translocated to peroxisomes in response to reactive oxygen species (ROS), and catalyzes phosphorylation of PEX5, promoting PEX5 ubiquitination and induction of pexophagy. This is Serine-protein kinase ATM (Atm) from Mus musculus (Mouse).